The following is a 305-amino-acid chain: Tyrosine recombinase XerC (305 aa).

A Core-binding (CB) domain is found at Met-1–Leu-94. The region spanning Lys-115–Asp-292 is the Tyr recombinase domain. Active-site residues include Arg-154, Lys-178, His-244, Arg-247, and His-270. Tyr-279 (O-(3'-phospho-DNA)-tyrosine intermediate) is an active-site residue.

It belongs to the 'phage' integrase family. XerC subfamily. In terms of assembly, forms a cyclic heterotetrameric complex composed of two molecules of XerC and two molecules of XerD.

The protein resides in the cytoplasm. Its function is as follows. Site-specific tyrosine recombinase, which acts by catalyzing the cutting and rejoining of the recombining DNA molecules. The XerC-XerD complex is essential to convert dimers of the bacterial chromosome into monomers to permit their segregation at cell division. It also contributes to the segregational stability of plasmids. The polypeptide is Tyrosine recombinase XerC (Xanthomonas axonopodis pv. citri (strain 306)).